Here is a 186-residue protein sequence, read N- to C-terminus: Tumor necrosis factor alpha-induced protein 8-like protein 1 (186 aa).

The protein belongs to the TNFAIP8 family. In terms of assembly, interacts with FBXW5; TNFAIP8L1 competes with TSC2 to bind FBXW5 increasing TSC2 stability by preventing its ubiquitination.

The protein resides in the cytoplasm. Acts as a negative regulator of mTOR activity. The polypeptide is Tumor necrosis factor alpha-induced protein 8-like protein 1 (TNFAIP8L1) (Bos taurus (Bovine)).